We begin with the raw amino-acid sequence, 183 residues long: Acireductone dioxygenase (183 aa).

H99, H101, E105, and H144 together coordinate Fe(2+). The Ni(2+) site is built by H99, H101, E105, and H144.

Belongs to the acireductone dioxygenase (ARD) family. Monomer. The cofactor is Fe(2+). It depends on Ni(2+) as a cofactor.

The enzyme catalyses 1,2-dihydroxy-5-(methylsulfanyl)pent-1-en-3-one + O2 = 3-(methylsulfanyl)propanoate + CO + formate + 2 H(+). It carries out the reaction 1,2-dihydroxy-5-(methylsulfanyl)pent-1-en-3-one + O2 = 4-methylsulfanyl-2-oxobutanoate + formate + 2 H(+). Its pathway is amino-acid biosynthesis; L-methionine biosynthesis via salvage pathway; L-methionine from S-methyl-5-thio-alpha-D-ribose 1-phosphate: step 5/6. In terms of biological role, catalyzes 2 different reactions between oxygen and the acireductone 1,2-dihydroxy-3-keto-5-methylthiopentene (DHK-MTPene) depending upon the metal bound in the active site. Fe-containing acireductone dioxygenase (Fe-ARD) produces formate and 2-keto-4-methylthiobutyrate (KMTB), the alpha-ketoacid precursor of methionine in the methionine recycle pathway. Ni-containing acireductone dioxygenase (Ni-ARD) produces methylthiopropionate, carbon monoxide and formate, and does not lie on the methionine recycle pathway. The polypeptide is Acireductone dioxygenase (Microcystis aeruginosa).